Here is a 683-residue protein sequence, read N- to C-terminus: WD repeat-containing protein 48 homolog (683 aa).

7 WD repeats span residues serine 27–tyrosine 82, glutamine 88–cysteine 130, threonine 133–asparagine 167, glycine 176–lysine 215, glycine 218–threonine 257, alanine 260–leucine 299, and lysine 302–isoleucine 343. Residues leucine 341–serine 364 are disordered. Over residues serine 351–serine 364 the composition is skewed to low complexity. One copy of the WD 8 repeat lies at proline 389–aspartate 428.

The protein belongs to the WD repeat WDR48 family. In terms of assembly, interacts with usp-46; the interaction increases the catalytic activity of usp-46 in the presence of wdr-20. Expressed in several head neurons and cells in the tail including the anal depressor cell.

Functionally, together with wdr-20, binds to and stimulates the activity of the deubiquitinating enzyme usp-46, leading to deubiquitination and stabilization of the glr-1 glutamate receptor. The chain is WD repeat-containing protein 48 homolog (wdr-48) from Caenorhabditis elegans.